Here is a 413-residue protein sequence, read N- to C-terminus: Arginine biosynthesis bifunctional protein ArgJ 1 (413 aa).

Thr154, Lys180, Thr191, Glu277, Asn408, and Thr413 together coordinate substrate. The Nucleophile role is filled by Thr191.

It belongs to the ArgJ family. Heterotetramer of two alpha and two beta chains.

Its subcellular location is the cytoplasm. The enzyme catalyses N(2)-acetyl-L-ornithine + L-glutamate = N-acetyl-L-glutamate + L-ornithine. It catalyses the reaction L-glutamate + acetyl-CoA = N-acetyl-L-glutamate + CoA + H(+). Its pathway is amino-acid biosynthesis; L-arginine biosynthesis; L-ornithine and N-acetyl-L-glutamate from L-glutamate and N(2)-acetyl-L-ornithine (cyclic): step 1/1. It functions in the pathway amino-acid biosynthesis; L-arginine biosynthesis; N(2)-acetyl-L-ornithine from L-glutamate: step 1/4. Its function is as follows. Catalyzes two activities which are involved in the cyclic version of arginine biosynthesis: the synthesis of N-acetylglutamate from glutamate and acetyl-CoA as the acetyl donor, and of ornithine by transacetylation between N(2)-acetylornithine and glutamate. In Nostoc sp. (strain PCC 7120 / SAG 25.82 / UTEX 2576), this protein is Arginine biosynthesis bifunctional protein ArgJ 1.